Reading from the N-terminus, the 459-residue chain is FBD-associated F-box protein At4g13985 (459 aa).

Residues 18 to 64 (VDRLRNLPDCLLFKILLNLPTKDVVKLSVLSRRWRNVWRYVPGLDLE) enclose the F-box domain. The FBD domain occupies 375–429 (KEGANILPGPRRFLTSLEYVKIAKPMAAEASEIKLKLVSYFLENSTILKKLTLCL).

The polypeptide is FBD-associated F-box protein At4g13985 (Arabidopsis thaliana (Mouse-ear cress)).